We begin with the raw amino-acid sequence, 398 residues long: Phytoene synthase, chloroplastic (398 aa).

It belongs to the phytoene/squalene synthase family. As to quaternary structure, monomer.

It is found in the plastid. The protein localises to the chloroplast. The enzyme catalyses 2 (2E,6E,10E)-geranylgeranyl diphosphate = 15-cis-phytoene + 2 diphosphate. The protein operates within carotenoid biosynthesis; phytoene biosynthesis; all-trans-phytoene from geranylgeranyl diphosphate: step 1/1. Catalyzes the reaction from prephytoene diphosphate to phytoene. The chain is Phytoene synthase, chloroplastic (PSY) from Daucus carota (Wild carrot).